A 136-amino-acid polypeptide reads, in one-letter code: Small ribosomal subunit protein uS9 (136 aa).

The protein belongs to the universal ribosomal protein uS9 family.

This is Small ribosomal subunit protein uS9 from Borreliella afzelii (strain PKo) (Borrelia afzelii).